The sequence spans 348 residues: MAFSYNYSLQASYPSQRAYVPYQQTQVPTPSPIYSLPITNTTTSGALSPSSCFLSVRQQPKEALVTVKGKEKFRKPLDPPPMLELKVSSDIDPSQQFLQNPYLFVSVSLYKHDKDEPIEGTPFDVLAGTLVSSLHRLKDVNNKDGAFFIFGDISIKVQGTYRLRFTLYELQPSYFTLSDLEQHKDLERYQGAALDPPEYGTYQCLGHVLSDKFNVVLPKDFKGLEESTYLSRAFSDQGVRLRLRKEARGMMSNKRSISGSGDLTSDQSQQQQQQQPLAKKRREDSVESANPSSLMSGFYQNVSPFVNTPYLQSQGLQGQTLQNQGLQAPVRHDTSYAWNLAYDPSFMG.

Residues 46-244 (ALSPSSCFLS…SDQGVRLRLR (199 aa)) form the Velvet domain. Residues 250–294 (MMSNKRSISGSGDLTSDQSQQQQQQQPLAKKRREDSVESANPSSL) form a disordered region. Positions 253-266 (NKRSISGSGDLTSD) are enriched in polar residues. The short motif at 274 to 280 (QQPLAKK) is the Nuclear localization signal element.

The protein belongs to the velvet family. VosA subfamily. As to quaternary structure, forms a heterodimeric complex with VEL2; the formation of the VEL2-VOS1 complex is light-dependent.

The protein localises to the nucleus. Its function is as follows. Component of the velB-VosA heterodimeric complex that plays a dual role in activating genes associated with spore maturation and repressing certain development-associated genes. The complex binds DNA through the DNA-binding domain of vosA that recognizes an 11-nucleotide consensus sequence 5'-CTGGCCGCGGC-3' consisting of two motifs in the promoters of key developmental regulatory genes. Regulates spore viability, trehalose accumulation, and tolerance to thermal and oxidative as well as ion stresses. Positively regulates conidial pigmentation and pathogenicity on barley. The sequence is that of Spore development regulator vosA from Cochliobolus sativus (strain ND90Pr / ATCC 201652) (Common root rot and spot blotch fungus).